We begin with the raw amino-acid sequence, 124 residues long: ATP synthase epsilon chain (124 aa).

Belongs to the ATPase epsilon chain family. As to quaternary structure, F-type ATPases have 2 components, CF(1) - the catalytic core - and CF(0) - the membrane proton channel. CF(1) has five subunits: alpha(3), beta(3), gamma(1), delta(1), epsilon(1). CF(0) has three main subunits: a, b and c.

The protein resides in the cell membrane. Its function is as follows. Produces ATP from ADP in the presence of a proton gradient across the membrane. This is ATP synthase epsilon chain from Streptomyces avermitilis (strain ATCC 31267 / DSM 46492 / JCM 5070 / NBRC 14893 / NCIMB 12804 / NRRL 8165 / MA-4680).